The sequence spans 493 residues: FAD-linked oxidoreductase tazL (493 aa).

The N-terminal stretch at 1–17 (MRSNTVILAALPLVASA) is a signal peptide. N-linked (GlcNAc...) asparagine glycans are attached at residues N29, N41, N53, N91, N253, N318, and N387. The 173-residue stretch at 63–235 (WAEPTFAVTI…TSATYEIFDA (173 aa)) folds into the FAD-binding PCMH-type domain.

It belongs to the oxygen-dependent FAD-linked oxidoreductase family.

It participates in secondary metabolite biosynthesis. Its function is as follows. FAD-linked oxidoreductase; part of the gene cluster that mediates the biosynthesis of azaterrilone A and other azaphilones, a class of fungal metabolites characterized by a highly oxygenated pyrano-quinone bicyclic core and exhibiting a broad range of bioactivities. The first step of the pathway begins with the non-reducing polyketide synthase tazA that assembles one acetyl-CoA starter unit, five malonyl-CoA units, and catalyzes a series of Claisen condensations, methylation, PT-mediated cyclization, and finally releases the first hexaketide precursor through the R-domain. The tazA product then undergoes reduction on its terminal ketone and the following pyran-ring formation by yet undetermined enzyme(s). Dehydration and enoyl reduction, possibly involving the trans-enoyl reductase tazE leads to the next intermediate. TazD is predicted as an acetyltransferase and might catalyze the acetylation steps leading to the synthesis of azaterrilone A. Azaterrilone A is not the final product of the taz pathway and both the highly reducing polyketide synthase tazB and the dual enzyme tazHJ catalyze late steps of the pathway, leading to the production of the 2 final stereoisomers that contain additional polyketide modification whose structures have still to be determined. The protein is FAD-linked oxidoreductase tazL of Aspergillus terreus (strain NIH 2624 / FGSC A1156).